Consider the following 386-residue polypeptide: Heat-inducible transcription repressor HrcA (386 aa).

It belongs to the HrcA family.

Negative regulator of class I heat shock genes (grpE-dnaK-dnaJ and groELS operons). Prevents heat-shock induction of these operons. This chain is Heat-inducible transcription repressor HrcA, found in Chlamydia abortus (strain DSM 27085 / S26/3) (Chlamydophila abortus).